The primary structure comprises 285 residues: Protein unc-1 (285 aa).

2 helical membrane-spanning segments follow: residues 27–47 (IGTI…IVTF) and 69–89 (IGRL…IPCI).

This sequence belongs to the band 7/mec-2 family.

The protein resides in the cell membrane. It localises to the cell junction. Its subcellular location is the gap junction. The chain is Protein unc-1 (unc-1) from Caenorhabditis elegans.